The sequence spans 469 residues: Zinc transporter SLC39A7 (469 aa).

A helical transmembrane segment spans residues 10-30; that stretch reads WVAVGLLTWATLGLLVAELGG. Composition is skewed to basic and acidic residues over residues 42–56 and 66–114; these read FHGHSHRHSHEDFHH and HTHE…EHSR. The tract at residues 42–121 is disordered; the sequence is FHGHSHRHSH…HSRGGYGESG (80 aa). Pros-methylhistidine is present on His66. Transmembrane regions (helical) follow at residues 138 to 158, 169 to 189, and 214 to 234; these read ALGATVLISAAPFFVLFLIPV, LQILLSFASGGLLGDAFLHLI, and GPILSVGLWVLSGIVAFLVVE. Residues 242-263 show a composition bias toward basic residues; the sequence is GGHGHSHGHGHAHSHTHGSHGH. Residues 242–310 form a disordered region; the sequence is GGHGHSHGHG…VRPQNAEEEK (69 aa). The span at 264 to 285 shows a compositional bias: basic and acidic residues; sequence GRQECSTKEKQSSEEEEKETRG. Residues Ser275 and Ser276 each carry the phosphoserine modification. The next 3 helical transmembrane spans lie at 386–406, 410–430, and 448–468; these read LTAVGALAGTACALLTEGGAV, IAGGAGPGWVLPFTAGGFIYV, and SLLEVLGLLGGVVMMVLIAHL.

This sequence belongs to the ZIP transporter (TC 2.A.5) family. KE4/Catsup subfamily. Homodimer. In terms of processing, methylation at some His residue by METTL9 leads to reduced zinc-binding. Rapidly phosphorylated by CK2 following Zn(2+) treatment. This phosphorylation is required for efficient cytosolic Zn(2+) release.

The protein resides in the endoplasmic reticulum membrane. It localises to the golgi apparatus. The protein localises to the cis-Golgi network membrane. The enzyme catalyses Zn(2+)(in) = Zn(2+)(out). Transports Zn(2+) from the endoplasmic reticulum (ER)/Golgi apparatus to the cytosol, playing an essential role in the regulation of cytosolic zinc levels. Acts as a gatekeeper of zinc release from intracellular stores, requiring post-translational activation by phosphorylation, resulting in activation of multiple downstream pathways leading to cell growth and proliferation. Has an essential role in B cell development and is required for proper B cell receptor signaling. Plays an important role in maintaining intestinal epithelial homeostasis and skin dermis development by regulating ER function. Controls cell signaling pathways involved in glucose metabolism in skeletal muscle. Has a protective role against ER stress in different biological contexts. Mediates Zn(2+)-induced ferroptosis. This chain is Zinc transporter SLC39A7, found in Pongo abelii (Sumatran orangutan).